Here is a 61-residue protein sequence, read N- to C-terminus: Large ribosomal subunit protein uL30 (61 aa).

The protein belongs to the universal ribosomal protein uL30 family. As to quaternary structure, part of the 50S ribosomal subunit.

In Corynebacterium diphtheriae (strain ATCC 700971 / NCTC 13129 / Biotype gravis), this protein is Large ribosomal subunit protein uL30.